Reading from the N-terminus, the 360-residue chain is Alkanal monooxygenase alpha chain (360 aa).

This sequence belongs to the bacterial luciferase oxidoreductase family. As to quaternary structure, heterodimer of an alpha and a beta chain.

The catalysed reaction is a long-chain fatty aldehyde + FMNH2 + O2 = a long-chain fatty acid + hnu + FMN + H2O + 2 H(+). Its function is as follows. Light-emitting reaction in luminous bacteria. The polypeptide is Alkanal monooxygenase alpha chain (luxA) (Photorhabdus luminescens (Xenorhabdus luminescens)).